The sequence spans 61 residues: MARKAMVVKQQRKQKYATREYTRCTICGRPHSVLKKFGICRICFRELAYKGQIPGVRKASW.

Zn(2+)-binding residues include Cys-24, Cys-27, Cys-40, and Cys-43.

The protein belongs to the universal ribosomal protein uS14 family. Zinc-binding uS14 subfamily. In terms of assembly, part of the 30S ribosomal subunit. Contacts proteins S3 and S10. Zn(2+) is required as a cofactor.

Its function is as follows. Binds 16S rRNA, required for the assembly of 30S particles and may also be responsible for determining the conformation of the 16S rRNA at the A site. In Clostridioides difficile (strain 630) (Peptoclostridium difficile), this protein is Small ribosomal subunit protein uS14.